The primary structure comprises 186 residues: MSHEELAEVLAKVLKKRGAVLRGDFVLSSGRRSSVYIDMRRLLGDESSYSVALDLLLEVGGQDLARSSAVIGVATGGLPWAAMLALRLSKPLGYVRPERKGHGTLSQVEGDPPKGRVVVVDDVATTGTSIAKSIEVLRSNGYTVGTALVLVDRGEGAGELLARMGVRLVSVATLKTILEKLGWGGE.

Residues R96, K100, H102, and 121-129 (DDVATTGTS) each bind 5-phospho-alpha-D-ribose 1-diphosphate. The orotate site is built by T125 and R153.

It belongs to the purine/pyrimidine phosphoribosyltransferase family. PyrE subfamily. In terms of assembly, homodimer. Mg(2+) serves as cofactor.

The enzyme catalyses orotidine 5'-phosphate + diphosphate = orotate + 5-phospho-alpha-D-ribose 1-diphosphate. Its pathway is pyrimidine metabolism; UMP biosynthesis via de novo pathway; UMP from orotate: step 1/2. Its function is as follows. Catalyzes the transfer of a ribosyl phosphate group from 5-phosphoribose 1-diphosphate to orotate, leading to the formation of orotidine monophosphate (OMP). The polypeptide is Orotate phosphoribosyltransferase (Aeropyrum pernix (strain ATCC 700893 / DSM 11879 / JCM 9820 / NBRC 100138 / K1)).